A 66-amino-acid chain; its full sequence is Large ribosomal subunit protein bL35 (66 aa).

Residues 1-16 (MPKMKTHRGAAKRVKR) are compositionally biased toward basic residues. The interval 1 to 28 (MPKMKTHRGAAKRVKRTGSGQLKRSRAF) is disordered.

It belongs to the bacterial ribosomal protein bL35 family.

The sequence is that of Large ribosomal subunit protein bL35 from Staphylococcus epidermidis (strain ATCC 35984 / DSM 28319 / BCRC 17069 / CCUG 31568 / BM 3577 / RP62A).